Consider the following 269-residue polypeptide: MERREFCASLLAGGTAGMCVDLILFPLDTIKTRLQSPLGFSKSGGFRGIYAGVPSTAVGSFPNAAAFFVTYESAKQLLRSDSSYLSPIIHMAAASLGEVVACLIRVPSEVIKQRAQVSPSSTTYQMLSATLRQEGIKGLYRGYKSTVLREIPFSLVQFPLWESLKDLWSWKQGRAVDSWQSAVCGAFAGGFAAALTTPLDVAKTRIMLAKAGSGVASGNVLFALHEIWRTQGIMGLFAGVIPRMTAISLGGFIFLGAYDKVRTLMLREQ.

Solcar repeat units lie at residues 4–77, 85–167, and 176–264; these read REFC…AKQL, LSPI…LKDL, and VDSW…VRTL. 6 consecutive transmembrane segments (helical) span residues 5-25, 49-69, 84-104, 141-161, 181-201, and 237-257; these read EFCASLLAGGTAGMCVDLILF, IYAGVPSTAVGSFPNAAAFFV, YLSPIIHMAAASLGEVVACLI, RGYKSTVLREIPFSLVQFPLW, SAVCGAFAGGFAAALTTPLDV, and FAGVIPRMTAISLGGFIFLGA.

This sequence belongs to the mitochondrial carrier (TC 2.A.29) family.

It is found in the mitochondrion inner membrane. The enzyme catalyses S-adenosyl-L-homocysteine(out) + S-adenosyl-L-methionine(in) = S-adenosyl-L-homocysteine(in) + S-adenosyl-L-methionine(out). Its function is as follows. Mitochondrial S-adenosyl-L-methionine/S-adenosyl-L-homocysteine antiporter. Mediates the exchange of cytosolic S-adenosyl-L-methionine, the predominant methyl-group donor for macromolecule methylation processes, for mitochondrial S-adenosylhomocysteine(SAH), a by-product of methylation reactions. The protein is Mitochondrial S-adenosylmethionine carrier protein (slc25a26) of Xenopus tropicalis (Western clawed frog).